The chain runs to 765 residues: Putative U-box domain-containing protein 50 (765 aa).

A coiled-coil region spans residues 198–391 (QEIENYFQQL…NRRIEFCKER (194 aa)). The Protein kinase domain occupies 422–765 (SDRLRLKSGG…HSKRAAQASS (344 aa)). Residues 428–436 (KSGGNWTNV) and Lys449 each bind ATP. Residues 688–762 (DIPSVFMCPI…QDWHSKRAAQ (75 aa)) enclose the U-box domain.

The protein belongs to the protein kinase superfamily. Ser/Thr protein kinase family.

It catalyses the reaction S-ubiquitinyl-[E2 ubiquitin-conjugating enzyme]-L-cysteine + [acceptor protein]-L-lysine = [E2 ubiquitin-conjugating enzyme]-L-cysteine + N(6)-ubiquitinyl-[acceptor protein]-L-lysine.. Its pathway is protein modification; protein ubiquitination. Functionally, functions as an E3 ubiquitin ligase. In Arabidopsis thaliana (Mouse-ear cress), this protein is Putative U-box domain-containing protein 50 (PUB50).